The chain runs to 93 residues: Signal recognition particle 19 kDa protein (93 aa).

The protein belongs to the SRP19 family. As to quaternary structure, part of the signal recognition particle protein translocation system, which is composed of SRP and FtsY. Archaeal SRP consists of a 7S RNA molecule of 300 nucleotides and two protein subunits: SRP54 and SRP19.

The protein localises to the cytoplasm. Its function is as follows. Involved in targeting and insertion of nascent membrane proteins into the cytoplasmic membrane. Binds directly to 7S RNA and mediates binding of the 54 kDa subunit of the SRP. This is Signal recognition particle 19 kDa protein from Haloquadratum walsbyi (strain DSM 16790 / HBSQ001).